A 448-amino-acid chain; its full sequence is Methylenetetrahydrofolate--tRNA-(uracil-5-)-methyltransferase TrmFO (448 aa).

Position 13-18 (13-18 (GAGLAG)) interacts with FAD.

It belongs to the MnmG family. TrmFO subfamily. It depends on FAD as a cofactor.

It localises to the cytoplasm. It carries out the reaction uridine(54) in tRNA + (6R)-5,10-methylene-5,6,7,8-tetrahydrofolate + NADH + H(+) = 5-methyluridine(54) in tRNA + (6S)-5,6,7,8-tetrahydrofolate + NAD(+). The catalysed reaction is uridine(54) in tRNA + (6R)-5,10-methylene-5,6,7,8-tetrahydrofolate + NADPH + H(+) = 5-methyluridine(54) in tRNA + (6S)-5,6,7,8-tetrahydrofolate + NADP(+). Functionally, catalyzes the folate-dependent formation of 5-methyl-uridine at position 54 (M-5-U54) in all tRNAs. The polypeptide is Methylenetetrahydrofolate--tRNA-(uracil-5-)-methyltransferase TrmFO (Streptococcus pyogenes serotype M2 (strain MGAS10270)).